The chain runs to 41 residues: Ostricacin-2 (41 aa).

Disulfide bonds link Cys8-Cys36, Cys15-Cys30, and Cys20-Cys37.

The protein resides in the secreted. In terms of biological role, has antibacterial activity against the Gram-positive bacterium S.aureus 1056 MRSA (MIC=1.25 ug/ml) and the Gram-negative bacterium E.coli O157:H7 (MIC=0.96 ug/ml). Has antifungal activity against the yeast C.albicans 3153A (MIC=6.20 ug/ml). The protein is Ostricacin-2 of Struthio camelus (Common ostrich).